The following is a 353-amino-acid chain: ATP-dependent (S)-NAD(P)H-hydrate dehydratase (353 aa).

The YjeF C-terminal domain occupies 18–345; the sequence is MLARVRQMVP…DEVHTAFLNL (328 aa). Residues 95–121 are disordered; it reads RSSPPALSSSDSGSSPSRTKSAPDTDP. Residues 96 to 114 are compositionally biased toward low complexity; it reads SSPPALSSSDSGSSPSRTK. (6S)-NADPHX is bound by residues Gly143 and 196–202; that span reads NVVEFGR. ATP contacts are provided by residues 241-245 and 260-269; these read KGAKD and GGLKRSGGQG. Asp270 provides a ligand contact to (6S)-NADPHX.

It belongs to the NnrD/CARKD family. It depends on Mg(2+) as a cofactor.

The protein localises to the cytoplasm. The enzyme catalyses (6S)-NADHX + ATP = ADP + phosphate + NADH + H(+). The catalysed reaction is (6S)-NADPHX + ATP = ADP + phosphate + NADPH + H(+). Functionally, catalyzes the dehydration of the S-form of NAD(P)HX at the expense of ATP, which is converted to ADP. Together with NAD(P)HX epimerase, which catalyzes the epimerization of the S- and R-forms, the enzyme allows the repair of both epimers of NAD(P)HX, a damaged form of NAD(P)H that is a result of enzymatic or heat-dependent hydration. The protein is ATP-dependent (S)-NAD(P)H-hydrate dehydratase of Neurospora crassa (strain ATCC 24698 / 74-OR23-1A / CBS 708.71 / DSM 1257 / FGSC 987).